Reading from the N-terminus, the 1099-residue chain is Carbamoyl phosphate synthase large chain (1099 aa).

Residues 1–402 form a carboxyphosphate synthetic domain region; sequence MPKREDIKRI…ALGKALRSLE (402 aa). ATP-binding residues include Arg129, Arg169, Gly175, Gly176, Glu208, Val210, Glu215, Gly241, Ile242, His243, Gln285, and Glu299. In terms of domain architecture, ATP-grasp 1 spans 133–328; the sequence is KETMEKAGLE…IAKVAALLAV (196 aa). Mg(2+) contacts are provided by Gln285, Glu299, and Asn301. Positions 285, 299, and 301 each coordinate Mn(2+). The oligomerization domain stretch occupies residues 403-541; the sequence is LDAAPKLDLE…STYNGVENEA (139 aa). A carbamoyl phosphate synthetic domain region spans residues 542–944; the sequence is VPSDREKIMI…AFAKAQIAAG (403 aa). Residues 666 to 857 form the ATP-grasp 2 domain; the sequence is AKLLKQIGLK…VARIAAKIMV (192 aa). 10 residues coordinate ATP: Arg702, Lys741, Leu743, Glu748, Gly773, Val774, His775, Ser776, Gln816, and Glu828. Mg(2+) is bound by residues Gln816, Glu828, and Asn830. Mn(2+) is bound by residues Gln816, Glu828, and Asn830. Residues 945 to 1099 enclose the MGS-like domain; the sequence is NPLPTTGAIL…VRRLTDTWKM (155 aa). Positions 945–1099 are allosteric domain; the sequence is NPLPTTGAIL…VRRLTDTWKM (155 aa).

It belongs to the CarB family. In terms of assembly, composed of two chains; the small (or glutamine) chain promotes the hydrolysis of glutamine to ammonia, which is used by the large (or ammonia) chain to synthesize carbamoyl phosphate. Tetramer of heterodimers (alpha,beta)4. Requires Mg(2+) as cofactor. Mn(2+) serves as cofactor.

The enzyme catalyses hydrogencarbonate + L-glutamine + 2 ATP + H2O = carbamoyl phosphate + L-glutamate + 2 ADP + phosphate + 2 H(+). It carries out the reaction hydrogencarbonate + NH4(+) + 2 ATP = carbamoyl phosphate + 2 ADP + phosphate + 2 H(+). It functions in the pathway amino-acid biosynthesis; L-arginine biosynthesis; carbamoyl phosphate from bicarbonate: step 1/1. The protein operates within pyrimidine metabolism; UMP biosynthesis via de novo pathway; (S)-dihydroorotate from bicarbonate: step 1/3. Its function is as follows. Large subunit of the glutamine-dependent carbamoyl phosphate synthetase (CPSase). CPSase catalyzes the formation of carbamoyl phosphate from the ammonia moiety of glutamine, carbonate, and phosphate donated by ATP, constituting the first step of 2 biosynthetic pathways, one leading to arginine and/or urea and the other to pyrimidine nucleotides. The large subunit (synthetase) binds the substrates ammonia (free or transferred from glutamine from the small subunit), hydrogencarbonate and ATP and carries out an ATP-coupled ligase reaction, activating hydrogencarbonate by forming carboxy phosphate which reacts with ammonia to form carbamoyl phosphate. The protein is Carbamoyl phosphate synthase large chain of Thermotoga petrophila (strain ATCC BAA-488 / DSM 13995 / JCM 10881 / RKU-1).